The sequence spans 598 residues: Fructan 6-exohydrolase (598 aa).

A signal peptide spans 1 to 30 (MAARLPLAACVVAFHLCLLLSSLVRSPSTA). Residue Asp65 is part of the active site. N-linked (GlcNAc...) asparagine glycosylation is found at Asn93, Asn288, and Asn351. The cysteines at positions 451 and 497 are disulfide-linked. Asn572 carries an N-linked (GlcNAc...) asparagine glycan.

The protein belongs to the glycosyl hydrolase 32 family. As to expression, expressed in leaves, stems, roots and inflorescences. Maximum expression is detected in stems, particularly the penultimate internode.

It catalyses the reaction Hydrolysis of terminal, non-reducing (2-&gt;6)-linked beta-D-fructofuranose residues in fructans.. With respect to regulation, not inhibited by sucrose. Hydrolyzes levan-type beta-(2-&gt;6)-linked fructans to fructose, but not inulin-type beta-(2-&gt;1)-linked fructans. This chain is Fructan 6-exohydrolase, found in Triticum aestivum (Wheat).